A 142-amino-acid chain; its full sequence is Universal stress protein G (142 aa).

Belongs to the universal stress protein A family.

The sequence is that of Universal stress protein G (uspG) from Shigella flexneri.